A 739-amino-acid chain; its full sequence is Probable endo-1,3(4)-beta-glucanase An02g00850 (739 aa).

The first 24 residues, 1–24 (MPTSTLLWSVGSLALSSMVLPAAA), serve as a signal peptide directing secretion. Residues 31–283 (ETWKGEDFLT…WAGGVYSTSG (253 aa)) form the GH16 domain. Asparagine 59 and asparagine 74 each carry an N-linked (GlcNAc...) asparagine glycan. Catalysis depends on glutamate 140, which acts as the Nucleophile. Glutamate 145 acts as the Proton donor in catalysis. N-linked (GlcNAc...) asparagine glycosylation is present at asparagine 396. Low complexity-rich tracts occupy residues 431–442 (SEATEASNSEGS), 452–499 (TGAS…AGAT), and 507–522 (GASG…SAAA). The segment at 431-718 (SEATEASNSE…TPSTPVFTGG (288 aa)) is disordered. N-linked (GlcNAc...) asparagine glycosylation is found at asparagine 459 and asparagine 482. Residues 523–532 (TPSNVSSTGA) show a composition bias toward polar residues. Residues asparagine 526 and asparagine 537 are each glycosylated (N-linked (GlcNAc...) asparagine). Over residues 539–548 (SEDSSASSEA) the composition is skewed to polar residues. The span at 561–587 (GASAEANGNDSASSNAATASNVSGASA) shows a compositional bias: low complexity. N-linked (GlcNAc...) asparagine glycosylation is found at asparagine 569, asparagine 581, asparagine 592, and asparagine 620. Over residues 597–641 (ASAGANAGSSAAPSSVSGASAEANGSEGSSSHSSGSQAGAHSYGS) the composition is skewed to low complexity. The segment covering 654–673 (PSSSSHAFATAPSSTGSSRV) has biased composition (polar residues). Positions 674-713 (PTSAAAANNAAAATQGSSASGSNSGSSGHGSSSATTPSTP) are enriched in low complexity. Glycine 717 is lipidated: GPI-anchor amidated glycine. Residues 718 to 739 (GANKLTLGASSVLSVLAFALLA) constitute a propeptide, removed in mature form.

The protein belongs to the glycosyl hydrolase 16 family.

The protein resides in the cell membrane. It catalyses the reaction Endohydrolysis of (1-&gt;3)- or (1-&gt;4)-linkages in beta-D-glucans when the glucose residue whose reducing group is involved in the linkage to be hydrolyzed is itself substituted at C-3.. In terms of biological role, mixed-linked glucanase involved in the degradation of complex natural cellulosic substrates. This Aspergillus niger (strain ATCC MYA-4892 / CBS 513.88 / FGSC A1513) protein is Probable endo-1,3(4)-beta-glucanase An02g00850.